The following is a 168-amino-acid chain: NADH dehydrogenase [ubiquinone] 1 alpha subcomplex assembly factor 2 (168 aa).

The tract at residues 112–168 (GKETSEELLPSPTATQVKGHASAPYFGREEPSVAPTSTGKTFQPGSWTPEDGKRQSQ) is disordered. A Phosphoserine modification is found at S133. Residues 145-157 (APTSTGKTFQPGS) are compositionally biased toward polar residues.

It belongs to the complex I NDUFA12 subunit family. As to quaternary structure, interacts with ARMC9.

Its subcellular location is the mitochondrion. Its function is as follows. Acts as a molecular chaperone for mitochondrial complex I assembly. Complex I functions in the transfer of electrons from NADH to the respiratory chain. The immediate electron acceptor for the enzyme is believed to be ubiquinone. Is involved in the initial steps of cilia formation, including removal of CP110 from the mother centrioles, docking of membrane vesicles to the mother centrioles, and establishment of the transition zone. This chain is NADH dehydrogenase [ubiquinone] 1 alpha subcomplex assembly factor 2 (Ndufaf2), found in Mus musculus (Mouse).